A 569-amino-acid chain; its full sequence is Methionine--tRNA ligase (569 aa).

A 'HIGH' region motif is present at residues 11 to 21 (PYINGIKHLGN). 4 residues coordinate Zn(2+): Cys143, Cys146, Cys156, and Cys159. Residues 342–346 (KFSTS) carry the 'KMSKS' region motif. Thr345 contributes to the ATP binding site.

Belongs to the class-I aminoacyl-tRNA synthetase family. MetG type 1 subfamily. Monomer. Zn(2+) is required as a cofactor.

The protein localises to the cytoplasm. It catalyses the reaction tRNA(Met) + L-methionine + ATP = L-methionyl-tRNA(Met) + AMP + diphosphate. Functionally, is required not only for elongation of protein synthesis but also for the initiation of all mRNA translation through initiator tRNA(fMet) aminoacylation. In Caulobacter vibrioides (strain ATCC 19089 / CIP 103742 / CB 15) (Caulobacter crescentus), this protein is Methionine--tRNA ligase.